Reading from the N-terminus, the 792-residue chain is G-type lectin S-receptor-like serine/threonine-protein kinase At1g61440 (792 aa).

The signal sequence occupies residues 1–17 (MGKKRIVLLLFISFSYA). Positions 18-137 (EITKESPLSI…VTGRTLWESF (120 aa)) constitute a Bulb-type lectin domain. Residues 18–419 (EITKESPLSI…ELDVHKRKMT (402 aa)) are Extracellular-facing. Asparagine 46, asparagine 127, and asparagine 229 each carry an N-linked (GlcNAc...) asparagine glycan. The 37-residue stretch at 271–307 (PANSCDIYGVCGPFGFCVISDPPKCKCFKGFVPKSIE) folds into the EGF-like; atypical domain. Intrachain disulfides connect cysteine 275/cysteine 287 and cysteine 281/cysteine 295. N-linked (GlcNAc...) asparagine glycans are attached at residues asparagine 313, asparagine 329, and asparagine 368. Residues 326–408 (CQGNSTGKDA…GEILSIRLAH (83 aa)) enclose the PAN domain. Intrachain disulfides connect cysteine 361/cysteine 382 and cysteine 365/cysteine 371. Residues 420–440 (IVASTVSLTLFVILGFATFGF) traverse the membrane as a helical segment. The Cytoplasmic portion of the chain corresponds to 441–792 (WRNRVKHHDA…EMTESVILGR (352 aa)). Positions 478 to 763 (FSLSNKLGHG…DLPLPKQPTF (286 aa)) constitute a Protein kinase domain. Residues 484–492 (LGHGGFGSV) and lysine 506 each bind ATP. Phosphoserine is present on residues serine 512 and serine 527. The tract at residues 567–584 (RKRLELDWPKRFDIIQGI) is caM-binding. Aspartate 603 serves as the catalytic Proton acceptor. Phosphoserine occurs at positions 607 and 620. Residue threonine 637 is modified to Phosphothreonine. Phosphoserine is present on residues serine 680 and serine 774.

This sequence belongs to the protein kinase superfamily. Ser/Thr protein kinase family.

It localises to the cell membrane. It catalyses the reaction L-seryl-[protein] + ATP = O-phospho-L-seryl-[protein] + ADP + H(+). The enzyme catalyses L-threonyl-[protein] + ATP = O-phospho-L-threonyl-[protein] + ADP + H(+). This chain is G-type lectin S-receptor-like serine/threonine-protein kinase At1g61440, found in Arabidopsis thaliana (Mouse-ear cress).